The sequence spans 288 residues: 4-diphosphocytidyl-2-C-methyl-D-erythritol kinase (288 aa).

Lys22 is an active-site residue. 104–114 (PSQAGLGGGSS) provides a ligand contact to ATP. Residue Asp146 is part of the active site.

This sequence belongs to the GHMP kinase family. IspE subfamily.

It carries out the reaction 4-CDP-2-C-methyl-D-erythritol + ATP = 4-CDP-2-C-methyl-D-erythritol 2-phosphate + ADP + H(+). The protein operates within isoprenoid biosynthesis; isopentenyl diphosphate biosynthesis via DXP pathway; isopentenyl diphosphate from 1-deoxy-D-xylulose 5-phosphate: step 3/6. In terms of biological role, catalyzes the phosphorylation of the position 2 hydroxy group of 4-diphosphocytidyl-2C-methyl-D-erythritol. In Protochlamydia amoebophila (strain UWE25), this protein is 4-diphosphocytidyl-2-C-methyl-D-erythritol kinase.